A 902-amino-acid chain; its full sequence is Inter-alpha-trypsin inhibitor heavy chain H1 (902 aa).

The N-terminal stretch at 1–28 (MDGTMGLQGLLCLCLASHLALQAMPTQG) is a signal peptide. Residues 29-158 (SPTDSTKGNK…KATFQLTYEE (130 aa)) enclose the VIT domain. A glycan (S-linked (Hex...) cysteine) is linked at cysteine 52. An N-linked (GlcNAc...) asparagine glycan is attached at asparagine 69. Serine 121 carries the post-translational modification Phosphoserine. The N-linked (GlcNAc...) asparagine glycan is linked to asparagine 277. One can recognise a VWFA domain in the interval 282 to 442 (NKNVVFVIDI…WNFLEVRALE (161 aa)). Phosphothreonine is present on residues threonine 394 and threonine 399. Residues 637 to 651 (SASQPSPTHPSSSIQ) show a composition bias toward polar residues. The disordered stretch occupies residues 637–656 (SASQPSPTHPSSSIQKLPDR). O-linked (GalNAc...) serine glycosylation occurs at serine 639. An O-linked (GalNAc...) threonine glycan is attached at threonine 644. An Aspartate 1-(chondroitin 4-sulfate)-ester modification is found at aspartate 663. A propeptide spanning residues 664–902 (PHFIIRVPQK…HTDYIVPDIF (239 aa)) is cleaved from the precursor. An N-linked (GlcNAc...) asparagine glycan is attached at asparagine 741.

The protein belongs to the ITIH family. In terms of assembly, I-alpha-I plasma protease inhibitors are assembled from one or two heavy chains (HC) and one light chain, bikunin. Inter-alpha-inhibitor (I-alpha-I) is composed of ITIH1/HC1, ITIH2/HC2 and bikunin. Interacts with TNFAIP6 (via Link and CUB domains). In terms of processing, heavy chains are linked to bikunin via chondroitin 4-sulfate esterified to the alpha-carboxyl of the C-terminal aspartate after propeptide cleavage. Post-translationally, the S-linked glycan is composed of two 6-carbon sugars, possibly Glc or Gal.

The protein localises to the secreted. Functionally, may act as a carrier of hyaluronan in serum or as a binding protein between hyaluronan and other matrix protein, including those on cell surfaces in tissues to regulate the localization, synthesis and degradation of hyaluronan which are essential to cells undergoing biological processes. The protein is Inter-alpha-trypsin inhibitor heavy chain H1 (ITIH1) of Sus scrofa (Pig).